Here is a 470-residue protein sequence, read N- to C-terminus: Putative F-box/LRR-repeat protein At3g58920 (470 aa).

The region spanning 1–53 is the F-box domain; sequence MDRISNLPNEIICHIVSFLSAKEAAFASVLSKRWQNLFTIVQKLEFDDSVKNQ. LRR repeat units follow at residues 114-142, 143-170, 173-198, 225-250, 287-312, and 342-367; these read KLEIYGEDGYLLPSEVFTCKTIVDLKLTS, CIFAESYVIDVIPENAFLPGLESLFLKS, FSDLRGCAFQTLLSACPVLKTLTIYD, FTYFNGSDFKSITFDTPSLTYLKYID, EDDPITSNPTNLIKGLRNVEILHLST, and YECFNWRLLPILLKKTPNLKTLMIKG.

This Arabidopsis thaliana (Mouse-ear cress) protein is Putative F-box/LRR-repeat protein At3g58920.